Reading from the N-terminus, the 232-residue chain is Uracil-DNA glycosylase (232 aa).

The Proton acceptor role is filled by Asp66.

It belongs to the uracil-DNA glycosylase (UDG) superfamily. UNG family.

It localises to the cytoplasm. It carries out the reaction Hydrolyzes single-stranded DNA or mismatched double-stranded DNA and polynucleotides, releasing free uracil.. Functionally, excises uracil residues from the DNA which can arise as a result of misincorporation of dUMP residues by DNA polymerase or due to deamination of cytosine. The chain is Uracil-DNA glycosylase from Lactobacillus helveticus (strain DPC 4571).